The primary structure comprises 233 residues: Uracil-DNA glycosylase (233 aa).

Catalysis depends on Asp-70, which acts as the Proton acceptor.

This sequence belongs to the uracil-DNA glycosylase (UDG) superfamily. UNG family.

Its subcellular location is the cytoplasm. The catalysed reaction is Hydrolyzes single-stranded DNA or mismatched double-stranded DNA and polynucleotides, releasing free uracil.. Excises uracil residues from the DNA which can arise as a result of misincorporation of dUMP residues by DNA polymerase or due to deamination of cytosine. The polypeptide is Uracil-DNA glycosylase (Helicobacter acinonychis (strain Sheeba)).